We begin with the raw amino-acid sequence, 351 residues long: Beta-1,4-xylosyltransferase IRX9 (351 aa).

At 1–16 the chain is on the cytoplasmic side; the sequence is MGSLERSKKKAQVWKK. A helical; Signal-anchor for type II membrane protein transmembrane segment spans residues 17–36; it reads AVIHFSLCFVMGFFTGFAPA. Residues 37–351 lie on the Lumenal side of the membrane; it reads GKASFFSNFE…KFPTRTRLST (315 aa). N-linked (GlcNAc...) asparagine glycosylation is found at asparagine 64 and asparagine 74. Residues 80–107 form a disordered region; that stretch reads SQSQAPAPAESREAEGETRSLSEKEDEN. Residues 89-107 show a composition bias toward basic and acidic residues; sequence ESREAEGETRSLSEKEDEN. Residues asparagine 271 and asparagine 287 are each glycosylated (N-linked (GlcNAc...) asparagine).

This sequence belongs to the glycosyltransferase 43 family. In terms of tissue distribution, expressed in developing interfascicular fibers, primary and secondary xylem in stems and developing secondary xylem in roots.

It is found in the golgi apparatus membrane. The enzyme catalyses [(1-&gt;4)-beta-D-xylan](n) + UDP-alpha-D-xylose = [(1-&gt;4)-beta-D-xylan](n+1) + UDP + H(+). Its function is as follows. Involved in the synthesis of the hemicellulose glucuronoxylan, a major component of secondary cell walls. Xylan xylosyltransferase that acts cooperatively with IRX14 to achieve the successive addition of xylosyl residues during xylan backbone elongation. The polypeptide is Beta-1,4-xylosyltransferase IRX9 (Arabidopsis thaliana (Mouse-ear cress)).